Consider the following 493-residue polypeptide: UDP-N-acetylmuramoyl-L-alanyl-D-glutamate--2,6-diaminopimelate ligase (493 aa).

Position 30 (serine 30) interacts with UDP-N-acetyl-alpha-D-muramoyl-L-alanyl-D-glutamate. ATP is bound at residue 114–120 (GTNGKTS). UDP-N-acetyl-alpha-D-muramoyl-L-alanyl-D-glutamate-binding positions include 156 to 157 (TT), serine 183, glutamine 189, and arginine 191. Position 223 is an N6-carboxylysine (lysine 223). Meso-2,6-diaminopimelate is bound by residues arginine 386, 410 to 413 (DNPR), glycine 460, and glutamate 464. The short motif at 410 to 413 (DNPR) is the Meso-diaminopimelate recognition motif element.

This sequence belongs to the MurCDEF family. MurE subfamily. Mg(2+) serves as cofactor. In terms of processing, carboxylation is probably crucial for Mg(2+) binding and, consequently, for the gamma-phosphate positioning of ATP.

The protein localises to the cytoplasm. It catalyses the reaction UDP-N-acetyl-alpha-D-muramoyl-L-alanyl-D-glutamate + meso-2,6-diaminopimelate + ATP = UDP-N-acetyl-alpha-D-muramoyl-L-alanyl-gamma-D-glutamyl-meso-2,6-diaminopimelate + ADP + phosphate + H(+). It participates in cell wall biogenesis; peptidoglycan biosynthesis. In terms of biological role, catalyzes the addition of meso-diaminopimelic acid to the nucleotide precursor UDP-N-acetylmuramoyl-L-alanyl-D-glutamate (UMAG) in the biosynthesis of bacterial cell-wall peptidoglycan. This chain is UDP-N-acetylmuramoyl-L-alanyl-D-glutamate--2,6-diaminopimelate ligase, found in Chromobacterium violaceum (strain ATCC 12472 / DSM 30191 / JCM 1249 / CCUG 213 / NBRC 12614 / NCIMB 9131 / NCTC 9757 / MK).